Here is a 471-residue protein sequence, read N- to C-terminus: Mannose-1-phosphate guanylyltransferase (471 aa).

It belongs to the mannose-6-phosphate isomerase type 2 family.

It catalyses the reaction alpha-D-mannose 1-phosphate + GTP + H(+) = GDP-alpha-D-mannose + diphosphate. Its pathway is nucleotide-sugar biosynthesis; GDP-alpha-D-mannose biosynthesis; GDP-alpha-D-mannose from alpha-D-mannose 1-phosphate (GTP route): step 1/1. It participates in bacterial outer membrane biogenesis; LPS O-antigen biosynthesis. Its function is as follows. Involved in GDP-mannose biosynthesis which serves as the activated sugar nucleotide precursor for mannose residues in cell surface polysaccharides. This enzyme participates in synthesis of the LPS O9 antigen. The sequence is that of Mannose-1-phosphate guanylyltransferase (manC) from Escherichia coli.